Here is a 356-residue protein sequence, read N- to C-terminus: Alpha-N-acetylneuraminide alpha-2,8-sialyltransferase (356 aa).

Residues 1–29 lie on the Cytoplasmic side of the membrane; that stretch reads MSPCGRARRHTSRGAMAVLAWKFPRTRLP. A helical; Signal-anchor for type II membrane protein transmembrane segment spans residues 30–48; sequence VGASALCVVVLCWLYVFPV. Over 49–356 the chain is Lumenal; sequence YRLPDEKEIV…CEDNSLQPTS (308 aa). N71 and N119 each carry an N-linked (GlcNAc...) asparagine glycan. C138 and C287 are disulfide-bonded. 2 residues coordinate CMP-N-acetyl-beta-neuraminate: N143 and N166. N214 and N245 each carry an N-linked (GlcNAc...) asparagine glycan. CMP-N-acetyl-beta-neuraminate contacts are provided by S274, T275, G276, W296, and H310.

It belongs to the glycosyltransferase 29 family.

Its subcellular location is the golgi apparatus membrane. The enzyme catalyses an N-acetyl-alpha-neuraminyl-(2-&gt;3)-beta-D-galactosyl derivative + CMP-N-acetyl-beta-neuraminate = an N-acetyl-alpha-neuraminyl-(2-&gt;8)-N-acetyl-alpha-neuraminyl-(2-&gt;3)-beta-D-galactosyl derivative + CMP + H(+). It carries out the reaction a ganglioside GM3 (d18:1(4E)) + CMP-N-acetyl-beta-neuraminate = a ganglioside GD3 (d18:1(4E)) + CMP + H(+). The catalysed reaction is a ganglioside GD3 (d18:1(4E)) + CMP-N-acetyl-beta-neuraminate = a ganglioside GT3 (d18:1(4E)) + CMP + H(+). It catalyses the reaction a ganglioside GD1a (d18:1(4E)) + CMP-N-acetyl-beta-neuraminate = a ganglioside GT1a (d18:1(4E)) + CMP + H(+). The enzyme catalyses a ganglioside GT1b (d18:1(4E)) + CMP-N-acetyl-beta-neuraminate = a ganglioside GQ1b (d18:1(4E)) + CMP + H(+). It carries out the reaction a ganglioside GM1b (d18:1(4E)) + CMP-N-acetyl-beta-neuraminate = a ganglioside GD1c (d18:1(4E)) + CMP + H(+). The catalysed reaction is a ganglioside GD3 + CMP-N-acetyl-beta-neuraminate = a ganglioside GT3 + CMP + H(+). It catalyses the reaction [alpha-N-acetylneuraminyl-(2-&gt;8)](n)-alpha-N-acetylneuraminyl-(2-&gt;8)-alpha-N-acetylneuraminyl-(2-&gt;3)-beta-D-galactosyl-(1-&gt;4)-beta-D-glucosyl-(1&lt;-&gt;1)-ceramide + CMP-N-acetyl-beta-neuraminate = [alpha-N-acetylneuraminyl-(2-&gt;8)](n+1)-alpha-N-acetylneuraminyl-(2-&gt;8)-alpha-N-acetylneuraminyl-(2-&gt;3)-beta-D-galactosyl-(1-&gt;4)-beta-D-glucosyl-(1&lt;-&gt;1)-ceramide + CMP + H(+). It participates in protein modification; protein glycosylation. Its pathway is lipid metabolism; sphingolipid metabolism. Its function is as follows. Catalyzes the addition of sialic acid in alpha 2,8-linkage to the sialic acid moiety of the ganglioside GM3 to form ganglioside GD3; gangliosides are a subfamily of complex glycosphingolipds that contain one or more residues of sialic acid. Can catalyze the addition of a second alpha-2,8- sialic acid to GD3 to form GT3. Can use GM1b, GD1a and GT1b as acceptor substrates to synthesize GD1c, GT1a and GQ1b respectively. This is Alpha-N-acetylneuraminide alpha-2,8-sialyltransferase from Bos taurus (Bovine).